Reading from the N-terminus, the 860-residue chain is Valine--tRNA ligase (860 aa).

A 'HIGH' region motif is present at residues proline 43–histidine 53. The tract at residues leucine 469–glycine 491 is disordered. Residues lysine 574–serine 578 carry the 'KMSKS' region motif. Lysine 577 contributes to the ATP binding site.

The protein belongs to the class-I aminoacyl-tRNA synthetase family. ValS type 2 subfamily. In terms of assembly, monomer.

The protein localises to the cytoplasm. The enzyme catalyses tRNA(Val) + L-valine + ATP = L-valyl-tRNA(Val) + AMP + diphosphate. In terms of biological role, catalyzes the attachment of valine to tRNA(Val). As ValRS can inadvertently accommodate and process structurally similar amino acids such as threonine, to avoid such errors, it has a 'posttransfer' editing activity that hydrolyzes mischarged Thr-tRNA(Val) in a tRNA-dependent manner. This Salinispora tropica (strain ATCC BAA-916 / DSM 44818 / JCM 13857 / NBRC 105044 / CNB-440) protein is Valine--tRNA ligase.